The following is a 188-amino-acid chain: Probable thymidylate kinase (188 aa).

11–18 (GIDGSGKT) provides a ligand contact to ATP.

The protein belongs to the thymidylate kinase family.

The enzyme catalyses dTMP + ATP = dTDP + ADP. This chain is Probable thymidylate kinase (tmk), found in Methanocaldococcus jannaschii (strain ATCC 43067 / DSM 2661 / JAL-1 / JCM 10045 / NBRC 100440) (Methanococcus jannaschii).